We begin with the raw amino-acid sequence, 422 residues long: Glucuronoxylanase XynC (422 aa).

Residues 1–32 (MIPRIKKTICVLLVCFTMLSVMLGPGATEVLA) form the signal peptide. Glu171 (proton donor) is an active-site residue. Glu260 (nucleophile) is an active-site residue.

The protein belongs to the glycosyl hydrolase 30 family.

It is found in the secreted. It carries out the reaction Endohydrolysis of (1-&gt;4)-beta-D-xylosyl links in some glucuronoarabinoxylans.. It participates in glycan degradation; xylan degradation. Catalyzes the depolymerization of methylglucuronoxylan (MeGAXn) from different sources. It cleaves the beta-1,4-xylosidic bond penultimate to that linking carbon one of the xylose residue substituted with alpha-1,2-linked 4-O-methyl-D-glucuronate (MeGA). In Bacillus subtilis (strain 168), this protein is Glucuronoxylanase XynC (xynC).